A 312-amino-acid polypeptide reads, in one-letter code: Bifunctional pinoresinol-lariciresinol reductase 2 (312 aa).

NADP(+) is bound by residues 11–17 (GGTGYIG), Arg-36, and Lys-45. Lys-138 serves as the catalytic Proton acceptor. Arg-142 contacts NADP(+). His-270 contacts substrate.

Belongs to the NmrA-type oxidoreductase family. Isoflavone reductase subfamily. Dimer.

The catalysed reaction is (+)-lariciresinol + NADP(+) = (+)-pinoresinol + NADPH + H(+). It catalyses the reaction (-)-secoisolariciresinol + NADP(+) = (+)-lariciresinol + NADPH + H(+). It carries out the reaction (-)-lariciresinol + NADP(+) = (-)-pinoresinol + NADPH + H(+). In terms of biological role, reductase involved in lignan biosynthesis. Catalyzes the enantioselective sequential conversion of (+)-pinoresinol into (+)-lariciresinol and of (+)-lariciresinol into (-)-secoisolariciresinol. Can also convert with a lower efficiency (-)-pinoresinol into (-)-lariciresinol, but not (-)-lariciresinol into (+)-secoisolariciresinol. Abstracts the 4R-hydride from the NADPH cofactor during catalysis. The protein is Bifunctional pinoresinol-lariciresinol reductase 2 (PLR_Tp2) of Thuja plicata (Western red-cedar).